Consider the following 265-residue polypeptide: Undecaprenyl-diphosphatase (265 aa).

A run of 8 helical transmembrane segments spans residues 7-27 (VIVS…PISS), 45-65 (TKIL…YFFH), 86-106 (LHIL…YKKI), 108-128 (LLFN…FLLI), 145-165 (ISLL…YPGF), 186-206 (IEFS…YDFI), 214-234 (ILDL…SILC), and 245-265 (TSLI…YFIN).

This sequence belongs to the UppP family.

Its subcellular location is the cell membrane. It catalyses the reaction di-trans,octa-cis-undecaprenyl diphosphate + H2O = di-trans,octa-cis-undecaprenyl phosphate + phosphate + H(+). Its function is as follows. Catalyzes the dephosphorylation of undecaprenyl diphosphate (UPP). Confers resistance to bacitracin. The polypeptide is Undecaprenyl-diphosphatase (Buchnera aphidicola subsp. Acyrthosiphon pisum (strain 5A)).